We begin with the raw amino-acid sequence, 156 residues long: Movement protein P17 (156 aa).

The tract at residues Ala-38–Phe-54 is homodimerization. An RNA-binding region spans residues Asp-57–Gly-156. 4 positions are modified to phosphoserine: Ser-71, Ser-79, Ser-137, and Ser-140. Positions Ala-106 to Gly-156 are disordered. A compositionally biased stretch (basic residues) spans Lys-144–Gly-156.

The protein belongs to the polerovirus movement protein family. As to quaternary structure, homodimer. Post-translationally, expressed as a nonphosphorylated 20kDa form and a phosphorylated 22kDa form. Phosphorylated by a host PKC-related kinase. Serine phosphorylation is required for plamodesma targeting.

It localises to the host cell junction. The protein resides in the host plasmodesma. The protein localises to the host chloroplast envelope. It is found in the host Golgi apparatus. Its subcellular location is the host mitochondrion outer membrane. In terms of biological role, together with movement protein P3a, facilitates long-distance movement of virions in host. Transports viral genome to neighboring plant cells directly through plasmosdesmata, without any budding. The movement protein allows efficient cell to cell propagation, by bypassing the host cell wall barrier. Binds ssRNA. The chain is Movement protein P17 from Solanum tuberosum (Potato).